Consider the following 287-residue polypeptide: Small ribosomal subunit biogenesis GTPase RsgA (287 aa).

The CP-type G domain occupies 61–218 (SSELIRPTVA…LVDTPGFTTL (158 aa)). GTP-binding positions include 110–113 (NKED) and 161–169 (GPSGAGKST). Zn(2+) contacts are provided by C242, C247, H249, and C255.

The protein belongs to the TRAFAC class YlqF/YawG GTPase family. RsgA subfamily. Monomer. Associates with 30S ribosomal subunit, binds 16S rRNA. Requires Zn(2+) as cofactor.

Its subcellular location is the cytoplasm. Its function is as follows. One of several proteins that assist in the late maturation steps of the functional core of the 30S ribosomal subunit. Helps release RbfA from mature subunits. May play a role in the assembly of ribosomal proteins into the subunit. Circularly permuted GTPase that catalyzes slow GTP hydrolysis, GTPase activity is stimulated by the 30S ribosomal subunit. This chain is Small ribosomal subunit biogenesis GTPase RsgA, found in Clostridium perfringens (strain ATCC 13124 / DSM 756 / JCM 1290 / NCIMB 6125 / NCTC 8237 / Type A).